A 764-amino-acid chain; its full sequence is Molybdenum cofactor sulfurase 3 (764 aa).

K228 carries the post-translational modification N6-(pyridoxal phosphate)lysine. Residue C394 is part of the active site. In terms of domain architecture, MOSC spans 607-762; sequence LRLLKQSDEE…LYCNSVVEGL (156 aa).

The protein belongs to the class-V pyridoxal-phosphate-dependent aminotransferase family. MOCOS subfamily. Pyridoxal 5'-phosphate is required as a cofactor.

The catalysed reaction is Mo-molybdopterin + L-cysteine + AH2 = thio-Mo-molybdopterin + L-alanine + A + H2O. Functionally, sulfurates the molybdenum cofactor. Sulfation of molybdenum is essential for xanthine dehydrogenase (XDH) and aldehyde oxidase (ADO) enzymes in which molybdenum cofactor is liganded by 1 oxygen and 1 sulfur atom in active form. In Aedes aegypti (Yellowfever mosquito), this protein is Molybdenum cofactor sulfurase 3.